A 387-amino-acid chain; its full sequence is Formate-dependent phosphoribosylglycinamide formyltransferase (387 aa).

N(1)-(5-phospho-beta-D-ribosyl)glycinamide contacts are provided by residues 21 to 22 (EL) and Glu-81. ATP-binding positions include Arg-113, Lys-154, 159-164 (SSGHGQ), 193-196 (EEFI), and Glu-201. Residues 118–306 (TFAAEEVGVK…EFALHLRAVL (189 aa)) form the ATP-grasp domain. The Mg(2+) site is built by Glu-265 and Glu-277. N(1)-(5-phospho-beta-D-ribosyl)glycinamide is bound by residues Asp-284, Lys-352, and 359–360 (RR).

The protein belongs to the PurK/PurT family. Homodimer.

It carries out the reaction N(1)-(5-phospho-beta-D-ribosyl)glycinamide + formate + ATP = N(2)-formyl-N(1)-(5-phospho-beta-D-ribosyl)glycinamide + ADP + phosphate + H(+). Its pathway is purine metabolism; IMP biosynthesis via de novo pathway; N(2)-formyl-N(1)-(5-phospho-D-ribosyl)glycinamide from N(1)-(5-phospho-D-ribosyl)glycinamide (formate route): step 1/1. Functionally, involved in the de novo purine biosynthesis. Catalyzes the transfer of formate to 5-phospho-ribosyl-glycinamide (GAR), producing 5-phospho-ribosyl-N-formylglycinamide (FGAR). Formate is provided by PurU via hydrolysis of 10-formyl-tetrahydrofolate. This is Formate-dependent phosphoribosylglycinamide formyltransferase from Wolinella succinogenes (strain ATCC 29543 / DSM 1740 / CCUG 13145 / JCM 31913 / LMG 7466 / NCTC 11488 / FDC 602W) (Vibrio succinogenes).